The following is a 423-amino-acid chain: Gamma-glutamyl phosphate reductase (423 aa).

The protein belongs to the gamma-glutamyl phosphate reductase family.

Its subcellular location is the cytoplasm. It carries out the reaction L-glutamate 5-semialdehyde + phosphate + NADP(+) = L-glutamyl 5-phosphate + NADPH + H(+). It functions in the pathway amino-acid biosynthesis; L-proline biosynthesis; L-glutamate 5-semialdehyde from L-glutamate: step 2/2. In terms of biological role, catalyzes the NADPH-dependent reduction of L-glutamate 5-phosphate into L-glutamate 5-semialdehyde and phosphate. The product spontaneously undergoes cyclization to form 1-pyrroline-5-carboxylate. In Burkholderia pseudomallei (strain 1710b), this protein is Gamma-glutamyl phosphate reductase.